An 896-amino-acid chain; its full sequence is DNA mismatch repair protein MutS (896 aa).

ATP is bound at residue 638 to 645 (GPNMSGKS).

Belongs to the DNA mismatch repair MutS family.

Its function is as follows. This protein is involved in the repair of mismatches in DNA. It is possible that it carries out the mismatch recognition step. This protein has a weak ATPase activity. The sequence is that of DNA mismatch repair protein MutS from Fusobacterium nucleatum subsp. nucleatum (strain ATCC 25586 / DSM 15643 / BCRC 10681 / CIP 101130 / JCM 8532 / KCTC 2640 / LMG 13131 / VPI 4355).